A 239-amino-acid chain; its full sequence is Small ribosomal subunit protein uS3 (239 aa).

In terms of domain architecture, KH type-2 spans 40–108; that stretch reads RGLLEKELYS…VALNVQEVQN (69 aa). Positions 212–239 are disordered; sequence KPKARPELPKAEERPRRRRPAVRVKKEE. Basic and acidic residues predominate over residues 215-226; the sequence is ARPELPKAEERP. Basic residues predominate over residues 227–239; sequence RRRRPAVRVKKEE.

This sequence belongs to the universal ribosomal protein uS3 family. In terms of assembly, part of the 30S ribosomal subunit. Forms a tight complex with proteins S10 and S14.

Binds the lower part of the 30S subunit head. Binds mRNA in the 70S ribosome, positioning it for translation. In Thermus thermophilus (strain ATCC BAA-163 / DSM 7039 / HB27), this protein is Small ribosomal subunit protein uS3 (rpsC).